A 172-amino-acid polypeptide reads, in one-letter code: Protein-export protein SecB (172 aa).

Belongs to the SecB family. In terms of assembly, homotetramer, a dimer of dimers. One homotetramer interacts with 1 SecA dimer.

It is found in the cytoplasm. Functionally, one of the proteins required for the normal export of preproteins out of the cell cytoplasm. It is a molecular chaperone that binds to a subset of precursor proteins, maintaining them in a translocation-competent state. It also specifically binds to its receptor SecA. This Bordetella avium (strain 197N) protein is Protein-export protein SecB.